Reading from the N-terminus, the 410-residue chain is Peptidase T (410 aa).

His79 contacts Zn(2+). Residue Asp81 is part of the active site. Asp142 is a binding site for Zn(2+). Catalysis depends on Glu176, which acts as the Proton acceptor. Zn(2+)-binding residues include Glu177, Asp199, and His381.

This sequence belongs to the peptidase M20B family. It depends on Zn(2+) as a cofactor.

The protein resides in the cytoplasm. The enzyme catalyses Release of the N-terminal residue from a tripeptide.. In terms of biological role, cleaves the N-terminal amino acid of tripeptides. The protein is Peptidase T of Bacillus cereus (strain ATCC 10987 / NRS 248).